We begin with the raw amino-acid sequence, 967 residues long: Dolichyl-phosphooligosaccharide-protein glycotransferase 1 (967 aa).

Residues 1-21 (MVKTQIKEKKKDEKVTIPLPG) are Cytoplasmic-facing. Residues 22 to 42 (KIKTVLAFLVVLAFAAYGFYI) traverse the membrane as a helical segment. The Extracellular segment spans residues 43 to 112 (RHLTAGKYFS…ISIFGYNELE (70 aa)). The DXD motif 1 signature appears at 53–55 (DPD). A Mn(2+)-binding site is contributed by Asp55. The chain crosses the membrane as a helical span at residues 113 to 133 (AFLLWPPFVGFLSVIGVYLLG). Residues 134–135 (RK) lie on the Cytoplasmic side of the membrane. A helical transmembrane segment spans residues 136-156 (VLNEWAGMWGAIILSVLTANF). The Extracellular segment spans residues 157-165 (SRTFSGNAR). Arg165 and Asp167 together coordinate Mn(2+). The short motif at 165–167 (RGD) is the DXD motif 2 element. Residues 166-186 (GDGPFMMLFTFSAVLMLYYLT) traverse the membrane as a helical segment. At 187–193 (EENKNKK) the chain is on the cytoplasmic side. Residues 194-214 (IIWGTLFVLLAGISTAAWNGS) form a helical membrane-spanning segment. Pro215 is a topological domain (extracellular). Residues 216-236 (FGLMVLLGFASFQTIILFIFG) traverse the membrane as a helical segment. Residues 237 to 247 (KINELREFIKE) lie on the Cytoplasmic side of the membrane. Residues 248–268 (YYPAYLGILAISYLLTIPGIG) traverse the membrane as a helical segment. Position 269 (Lys269) is a topological domain, extracellular. The chain crosses the membrane as a helical span at residues 270–290 (IGGFVRFAFEVFLGLVFLAIV). At 291-306 (MLYGGKYLNYSDKKHR) the chain is on the cytoplasmic side. The helical transmembrane segment at 307–327 (FAVVAVIVIAGFAGAYIYVGP) threads the bilayer. Topologically, residues 328–360 (KLFTLMGGAYQSTQVYETVQELAKTDWGDVKVY) are extracellular. Residues 345–348 (TVQE) carry the TIXE motif motif. Residues 361 to 381 (YGVEKPNGIVFFLGLVGAMIV) traverse the membrane as a helical segment. At 382-396 (TARYLYKLFKDGRRP) the chain is on the cytoplasmic side. The chain crosses the membrane as a helical span at residues 397 to 417 (HEELFAITFYVMSIYLLWTAA). A topological domain (extracellular) is located at residue Arg418. Residue Arg418 participates in a glycophospholipid binding. Residues 419-439 (FLFLASYAIALMSGVFAGYVL) form a helical membrane-spanning segment. Over 440–453 (ETVEKMKESIPIKA) the chain is Cytoplasmic. Residues 454-474 (ALGGVIAIMLLLIPLTHGPLL) traverse the membrane as a helical segment. The Extracellular segment spans residues 475-967 (AQSAKSMRTT…LEVSASAPHH (493 aa)). The segment at 511-513 (WWD) is interacts with target acceptor peptide in protein substrate. Residues 511–515 (WWDYG) carry the WWDYG motif motif. Tyr516 provides a ligand contact to a glycophospholipid. Residues 571–578 (DWAKFNAI) carry the DK motif motif.

The protein belongs to the STT3 family. It depends on Mn(2+) as a cofactor. Mg(2+) serves as cofactor.

It is found in the cell membrane. It catalyses the reaction an archaeal dolichyl phosphooligosaccharide + [protein]-L-asparagine = an archaeal dolichyl phosphate + a glycoprotein with the oligosaccharide chain attached by N-beta-D-glycosyl linkage to a protein L-asparagine.. Its pathway is protein modification; protein glycosylation. Oligosaccharyl transferase (OST) that catalyzes the initial transfer of a defined glycan (ManNAcXyl(2)GlcAMan(2)GalNAc in P.furiosus) from the lipid carrier dolichol-monophosphate to an asparagine residue within an Asn-X-Ser/Thr consensus motif in nascent polypeptide chains, the first step in protein N-glycosylation. The polypeptide is Dolichyl-phosphooligosaccharide-protein glycotransferase 1 (aglB1) (Pyrococcus furiosus (strain ATCC 43587 / DSM 3638 / JCM 8422 / Vc1)).